Here is a 440-residue protein sequence, read N- to C-terminus: Enolase 1-2 (440 aa).

Histidine 160 and glutamate 169 together coordinate substrate. Glutamate 212 (proton donor) is an active-site residue. Residues aspartate 247, glutamate 296, and aspartate 321 each contribute to the Mg(2+) site. Substrate is bound by residues glutamate 296 and aspartate 321. Lysine 346 (proton acceptor) is an active-site residue. Substrate contacts are provided by residues 373–376 (SHRS) and lysine 397.

It belongs to the enolase family. In terms of assembly, homodimer. Requires Mg(2+) as cofactor.

The protein localises to the cytoplasm. It catalyses the reaction (2R)-2-phosphoglycerate = phosphoenolpyruvate + H2O. It participates in carbohydrate degradation; glycolysis; pyruvate from D-glyceraldehyde 3-phosphate: step 4/5. This chain is Enolase 1-2 (eno102), found in Schizosaccharomyces pombe (strain 972 / ATCC 24843) (Fission yeast).